A 2021-amino-acid polypeptide reads, in one-letter code: HEAT repeat-containing protein 5A (2021 aa).

HEAT repeat units lie at residues 795-836 (SQRP…HLAS) and 1059-1096 (VNLSSLVPTLCVHLYSPHLPLRRAVLACLRQLAQREAA). Disordered stretches follow at residues 1503–1528 (EGNGHLSRPVTPTSMGQERGSQLPAD) and 1989–2012 (RGNQESLKPKAPSRGTMGGGHGSP). A compositionally biased stretch (polar residues) spans 1512-1522 (VTPTSMGQERG).

This sequence belongs to the HEATR5 family.

This chain is HEAT repeat-containing protein 5A (heatr5a), found in Xenopus tropicalis (Western clawed frog).